The chain runs to 478 residues: Alcohol dehydrogenase (quinone), cytochrome c subunit (478 aa).

Positions 1 to 36 (MLNALTRDRLVSEMKQGWKLAAAIGLMAVSFGAAHA) are cleaved as a signal peptide. Q37 is modified (pyrrolidone carboxylic acid). 3 consecutive Cytochrome c domains span residues 42-145 (ALIK…MHGV), 189-304 (PEVA…KSMP), and 327-417 (GQGN…RKGW). Residues C56, C59, H60, C204, C207, H208, C340, C343, and H344 each coordinate heme c.

The alcohol dehydrogenase multicomponent enzyme system is composed of a dehydrogenase subunit I (AdhA), a cytochrome c subunit II (AdhB) and a subunit III (AdhS). Requires heme c as cofactor.

The protein localises to the cell membrane. It catalyses the reaction ethanol + a ubiquinone = a ubiquinol + acetaldehyde. Its activity is regulated as follows. 2,6-dichloro-4-dicyanovinylphenol (PC16) and antimycin A inhibit ubiquinol oxidation activity more selectively than the ubiquinone reductase activity. Cytochrome c component of the alcohol dehydrogenase multicomponent enzyme system which is involved in the production of acetic acid and in the ethanol oxidase respiratory chain. Quinohemoprotein alcohol dehydrogenase (ADH) catalyzes the oxidation of ethanol to acetaldehyde by transferring electrons to the ubiquinone embedded in the membrane phospholipids. The electrons transfer from ethanol to membranous ubiquinone occurs from pyrroloquinoline quinone (PQQ) to one heme c in subunit I (AdhA), and finally to two heme c in subunit II (AdhB). Besides ubiquinone reduction, ADH also has a ubiquinol (QH2) oxidation reaction which mediates electron transfer from ubiquinol to the non-energy generating bypass oxidase system. The electrons transfer occurs from ubiquinol (QH2) to the additional heme c within subunit II (AdhB). Also able to use quinone analogs such as 2,3-dimethoxy-5-methyl-6-n-decyl-1,4-benzoquinone (DB) and 2,3-dimethoxy-5-methyl-6-n-pentyl-1,4-benzoquinone (PB). This is Alcohol dehydrogenase (quinone), cytochrome c subunit from Gluconobacter oxydans (strain 621H) (Gluconobacter suboxydans).